A 320-amino-acid polypeptide reads, in one-letter code: Agamous-like MADS-box protein AGL90 (320 aa).

In terms of domain architecture, MADS-box spans 1–59 (MKKVKLSLIANERSRKTSFMKRKNGIFKKLHELSTLCGVQACALIYSPFIPVPESWPSR). Residues 80–115 (KMMDQETHLMERITKAKEQLKNLAAENRELQVRRFM) are a coiled coil.

Interacts with AGL62.

It localises to the nucleus. Its function is as follows. Probable transcription factor. In Arabidopsis thaliana (Mouse-ear cress), this protein is Agamous-like MADS-box protein AGL90 (AGL90).